A 530-amino-acid polypeptide reads, in one-letter code: CTP synthase (530 aa).

The interval 1 to 267 (MTKYVFVTGG…DDFVLNHFKM (267 aa)) is amidoligase domain. Serine 13 serves as a coordination point for CTP. Residue serine 13 coordinates UTP. Residue 14-19 (SLGKGI) coordinates ATP. An L-glutamine-binding site is contributed by tyrosine 54. ATP is bound at residue aspartate 71. Mg(2+)-binding residues include aspartate 71 and glutamate 141. CTP is bound by residues 148–150 (DIE), 188–193 (KTKPTQ), and lysine 224. UTP-binding positions include 188 to 193 (KTKPTQ) and lysine 224. An ATP-binding site is contributed by 240–242 (RDA). Residues 292 to 530 (KIALVGKYIE…LFKAFIGATM (239 aa)) form the Glutamine amidotransferase type-1 domain. Glycine 354 contributes to the L-glutamine binding site. Cysteine 381 serves as the catalytic Nucleophile; for glutamine hydrolysis. L-glutamine is bound by residues 382-385 (LGMQ), glutamate 405, and arginine 463. Residues histidine 508 and glutamate 510 contribute to the active site.

This sequence belongs to the CTP synthase family. In terms of assembly, homotetramer.

It carries out the reaction UTP + L-glutamine + ATP + H2O = CTP + L-glutamate + ADP + phosphate + 2 H(+). It catalyses the reaction L-glutamine + H2O = L-glutamate + NH4(+). The enzyme catalyses UTP + NH4(+) + ATP = CTP + ADP + phosphate + 2 H(+). It participates in pyrimidine metabolism; CTP biosynthesis via de novo pathway; CTP from UDP: step 2/2. With respect to regulation, allosterically activated by GTP, when glutamine is the substrate; GTP has no effect on the reaction when ammonia is the substrate. The allosteric effector GTP functions by stabilizing the protein conformation that binds the tetrahedral intermediate(s) formed during glutamine hydrolysis. Inhibited by the product CTP, via allosteric rather than competitive inhibition. Catalyzes the ATP-dependent amination of UTP to CTP with either L-glutamine or ammonia as the source of nitrogen. Regulates intracellular CTP levels through interactions with the four ribonucleotide triphosphates. The sequence is that of CTP synthase from Latilactobacillus sakei subsp. sakei (strain 23K) (Lactobacillus sakei subsp. sakei).